The chain runs to 84 residues: Small ribosomal subunit protein bS16 (84 aa).

The protein belongs to the bacterial ribosomal protein bS16 family.

The protein is Small ribosomal subunit protein bS16 of Burkholderia multivorans (strain ATCC 17616 / 249).